Reading from the N-terminus, the 203-residue chain is Holliday junction branch migration complex subunit RuvA (203 aa).

Residues Met1–Thr63 form a domain I region. Residues Asp64–Ala142 are domain II. A flexible linker region spans residues Gln143–Val150. A domain III region spans residues Val150–Asn203.

The protein belongs to the RuvA family. Homotetramer. Forms an RuvA(8)-RuvB(12)-Holliday junction (HJ) complex. HJ DNA is sandwiched between 2 RuvA tetramers; dsDNA enters through RuvA and exits via RuvB. An RuvB hexamer assembles on each DNA strand where it exits the tetramer. Each RuvB hexamer is contacted by two RuvA subunits (via domain III) on 2 adjacent RuvB subunits; this complex drives branch migration. In the full resolvosome a probable DNA-RuvA(4)-RuvB(12)-RuvC(2) complex forms which resolves the HJ.

The protein resides in the cytoplasm. Functionally, the RuvA-RuvB-RuvC complex processes Holliday junction (HJ) DNA during genetic recombination and DNA repair, while the RuvA-RuvB complex plays an important role in the rescue of blocked DNA replication forks via replication fork reversal (RFR). RuvA specifically binds to HJ cruciform DNA, conferring on it an open structure. The RuvB hexamer acts as an ATP-dependent pump, pulling dsDNA into and through the RuvAB complex. HJ branch migration allows RuvC to scan DNA until it finds its consensus sequence, where it cleaves and resolves the cruciform DNA. This chain is Holliday junction branch migration complex subunit RuvA, found in Corynebacterium diphtheriae (strain ATCC 700971 / NCTC 13129 / Biotype gravis).